The sequence spans 137 residues: Leaf-specific thionin (137 aa).

Residues 1–28 (MATNKSIKSVVICVLILGLVLEQVQVEA) form the signal peptide. 4 disulfide bridges follow: cysteine 31–cysteine 68, cysteine 32–cysteine 60, cysteine 40–cysteine 58, and cysteine 44–cysteine 54. A propeptide spans 75 to 137 (LNLLPESGEP…DGEVIQSVEA (63 aa)) (acidic domain).

Belongs to the plant thionin (TC 1.C.44) family. 4 C-C subfamily.

It is found in the secreted. Its function is as follows. Thionins are small plant proteins which are toxic to animal cells. They seem to exert their toxic effect at the level of the cell membrane. Their precise function is not known. This chain is Leaf-specific thionin (THI1.5), found in Hordeum vulgare (Barley).